We begin with the raw amino-acid sequence, 180 residues long: Stathmin-3 (180 aa).

Residues Cys-22 and Cys-24 are each lipidated (S-palmitoyl cysteine). In terms of domain architecture, SLD spans 38-180; that stretch reads GDMEVKQLDK…NKEQREEMSG (143 aa). Residues Ser-50, Ser-60, Ser-65, Ser-68, Ser-72, Ser-73, and Ser-81 each carry the phosphoserine modification. The segment covering 60–74 has biased composition (low complexity); that stretch reads SPSDLSPESPVLSSP. Residues 60 to 81 form a disordered region; the sequence is SPSDLSPESPVLSSPPKRKDAS. A coiled-coil region spans residues 75-179; it reads PKRKDASLEE…RNKEQREEMS (105 aa).

It belongs to the stathmin family. In terms of assembly, interacts with STAT3. Interacts with CLU (secreted form); this interaction may act as an important modulator during neuronal differentiation. In terms of processing, N-terminal palmitoylation promotes specific anchoring to the cytosolic leaflet of Golgi membranes and subsequent vesicular trafficking along dendrites and axons. Neuronal Stathmins are substrates for palmitoyltransferases ZDHHC3, ZDHHC7 and ZDHHC15. In terms of tissue distribution, neuron specific.

The protein localises to the golgi apparatus. Its subcellular location is the cell projection. It localises to the growth cone. It is found in the axon. The protein resides in the cytoplasm. The protein localises to the cytosol. Its function is as follows. Exhibits microtubule-destabilizing activity, which is antagonized by STAT3. The protein is Stathmin-3 (Stmn3) of Mus musculus (Mouse).